The chain runs to 160 residues: Cytochrome c-type biogenesis protein CcmE (160 aa).

Topologically, residues 1 to 8 are cytoplasmic; sequence MSAPRKTR. Residues 9 to 29 form a helical; Signal-anchor for type II membrane protein membrane-spanning segment; sequence LYAILAVICGAVLTVALTLYA. Residues 30–160 lie on the Periplasmic side of the membrane; it reads LSSNIDLFYT…PAAVTEGKRL (131 aa). Heme contacts are provided by His130 and Tyr134.

It belongs to the CcmE/CycJ family.

It is found in the cell inner membrane. In terms of biological role, heme chaperone required for the biogenesis of c-type cytochromes. Transiently binds heme delivered by CcmC and transfers the heme to apo-cytochromes in a process facilitated by CcmF and CcmH. The protein is Cytochrome c-type biogenesis protein CcmE of Pectobacterium carotovorum subsp. carotovorum (strain PC1).